A 427-amino-acid chain; its full sequence is Glutamate-1-semialdehyde 2,1-aminomutase (427 aa).

Lys268 is modified (N6-(pyridoxal phosphate)lysine).

It belongs to the class-III pyridoxal-phosphate-dependent aminotransferase family. HemL subfamily. The cofactor is pyridoxal 5'-phosphate.

The protein localises to the cytoplasm. It carries out the reaction (S)-4-amino-5-oxopentanoate = 5-aminolevulinate. Its pathway is porphyrin-containing compound metabolism; protoporphyrin-IX biosynthesis; 5-aminolevulinate from L-glutamyl-tRNA(Glu): step 2/2. The polypeptide is Glutamate-1-semialdehyde 2,1-aminomutase (Methanococcus maripaludis (strain DSM 14266 / JCM 13030 / NBRC 101832 / S2 / LL)).